The following is a 627-amino-acid chain: MAVASVLLALFMLFLSIVTVIGNLAVLLSYYLDKNIRQPTNYFIFSLAISDLLIGLEGIPVYTAFYLNNNEWIWGDVLCDLWLSIDYIVCLASIYTVLGITVDRYYSVKKPATYRNWRTPGRVVLIIIFIWLVPSILFSVSIFGYGTFTGTGRILKETECYVQFMTNPYLNMGMYISYYWTTLFVMLYLYWGIYRAAKKLALKSDQKTKRLALLTEMRRPEVSVRTSDAGNSSSDSPNDTSNSSKCFRTAPPTTTVQTTQTNVGTPPPVFRNHMTLHNNNMDFTKDNEIVRPPTPPDDNTYSNPNFSMISEQLTNGFSRQEPSSVIERESTAPCVSPEPSHASLENEFNENHHAHFKPELSLPFIDADSVSSMVGHDDLRRAMSIRISRSVSMQGTARATPVIEIVENLEEALKICENLEELREDENKNEEEKQKNGLENGGMNHVIIANDEQQPSTSKESEQKEEMTPENHDPNEVKVPLIAVSRVESVKSTAGGKVRRLITQMRSHSIRSKRKANKNKSVLSALNFFQRKKEYKSRSENRARKALRTITFILGSFIILWTPFYVLATIYGFCETCKASPSFNTLYTISYYLCYMNSPLNPFCYAMANQQFKKTLTRIFKGDFRRV.

The Extracellular segment spans residues 1–9 (MAVASVLLA). Residues 10 to 30 (LFMLFLSIVTVIGNLAVLLSY) traverse the membrane as a helical segment. Residues 31 to 41 (YLDKNIRQPTN) lie on the Cytoplasmic side of the membrane. Residues 42–62 (YFIFSLAISDLLIGLEGIPVY) form a helical membrane-spanning segment. The Extracellular portion of the chain corresponds to 63 to 81 (TAFYLNNNEWIWGDVLCDL). Residues C79 and C160 are joined by a disulfide bond. The helical transmembrane segment at 82–102 (WLSIDYIVCLASIYTVLGITV) threads the bilayer. The Cytoplasmic segment spans residues 103 to 122 (DRYYSVKKPATYRNWRTPGR). A helical membrane pass occupies residues 123-143 (VVLIIIFIWLVPSILFSVSIF). The Extracellular portion of the chain corresponds to 144 to 172 (GYGTFTGTGRILKETECYVQFMTNPYLNM). Residues 173-193 (GMYISYYWTTLFVMLYLYWGI) form a helical membrane-spanning segment. Topologically, residues 194 to 549 (YRAAKKLALK…ENRARKALRT (356 aa)) are cytoplasmic. Disordered regions lie at residues 222-266 (VSVR…VGTP), 423-442 (REDE…ENGG), and 449-475 (ANDE…HDPN). The segment covering 231–264 (NSSSDSPNDTSNSSKCFRTAPPTTTVQTTQTNVG) has biased composition (low complexity). A compositionally biased stretch (basic and acidic residues) spans 459-475 (KESEQKEEMTPENHDPN). The chain crosses the membrane as a helical span at residues 550 to 570 (ITFILGSFIILWTPFYVLATI). Topologically, residues 571 to 586 (YGFCETCKASPSFNTL) are extracellular. Residues 587-609 (YTISYYLCYMNSPLNPFCYAMAN) form a helical membrane-spanning segment. The Cytoplasmic portion of the chain corresponds to 610–627 (QQFKKTLTRIFKGDFRRV).

Belongs to the G-protein coupled receptor 1 family. Muscarinic acetylcholine receptor subfamily. Expressed in putative sensory neurons, many cells of the ventral cord and in the HSN motor neurons. Expressed in some cholinergic motor neurons and GABAergic motor neurons, which are the two major types of ventral cord motor neurons.

The protein localises to the cell membrane. It is found in the cell projection. It localises to the axon. In terms of biological role, the muscarinic acetylcholine receptor mediates various cellular responses, including inhibition of adenylate cyclase, breakdown of phosphoinositides and modulation of potassium channels through the action of G proteins. Primary transducing effect is Pi turnover. Regulates the activity of ventral cord motor neurons. Couples to the G(o)-alpha G-protein subunit goa-1 to negatively regulate cholinergic receptor activity in the presence of high levels of the neurotransmitter acetylcholine in ventral cord motor neurons. As acetylcholine depolarizes body wall muscles, modulation of acetylcholine levels most likely results in the control locomotory behavior and egg-laying. The chain is Muscarinic acetylcholine receptor gar-2 from Caenorhabditis elegans.